Consider the following 99-residue polypeptide: MAGSEGLMSVDYEVSGRVQGVFFRKYTQSEAKRLGLVGWVRNTSHGTVQGQAQGPAARVRELQEWLRKIGSPQSRISRAEFTNEKEIAALEHTDFQIRK.

An N-acetylalanine modification is found at alanine 2. The Acylphosphatase-like domain occupies 9–99; that stretch reads SVDYEVSGRV…LEHTDFQIRK (91 aa). Catalysis depends on residues arginine 24 and asparagine 42.

It belongs to the acylphosphatase family. Organ-common type isozyme is found in many different tissues.

It carries out the reaction an acyl phosphate + H2O = a carboxylate + phosphate + H(+). The protein is Acylphosphatase-1 (ACYP1) of Gallus gallus (Chicken).